The chain runs to 445 residues: Glutamate-1-semialdehyde 2,1-aminomutase (445 aa).

An N6-(pyridoxal phosphate)lysine modification is found at K281.

It belongs to the class-III pyridoxal-phosphate-dependent aminotransferase family. HemL subfamily. As to quaternary structure, homodimer. Pyridoxal 5'-phosphate is required as a cofactor.

It is found in the cytoplasm. The enzyme catalyses (S)-4-amino-5-oxopentanoate = 5-aminolevulinate. Its pathway is porphyrin-containing compound metabolism; protoporphyrin-IX biosynthesis; 5-aminolevulinate from L-glutamyl-tRNA(Glu): step 2/2. This Nocardioides sp. (strain ATCC BAA-499 / JS614) protein is Glutamate-1-semialdehyde 2,1-aminomutase.